Reading from the N-terminus, the 361-residue chain is Beta-hexosaminidase (361 aa).

Substrate-binding positions include Asp69, Arg77, Arg144, and 174-175 (KH). The Proton donor/acceptor role is filled by His187. The Nucleophile role is filled by Asp258.

It belongs to the glycosyl hydrolase 3 family. NagZ subfamily.

It localises to the cytoplasm. The enzyme catalyses Hydrolysis of terminal non-reducing N-acetyl-D-hexosamine residues in N-acetyl-beta-D-hexosaminides.. It participates in cell wall biogenesis; peptidoglycan recycling. Its function is as follows. Plays a role in peptidoglycan recycling by cleaving the terminal beta-1,4-linked N-acetylglucosamine (GlcNAc) from peptide-linked peptidoglycan fragments, giving rise to free GlcNAc, anhydro-N-acetylmuramic acid and anhydro-N-acetylmuramic acid-linked peptides. This chain is Beta-hexosaminidase, found in Neisseria gonorrhoeae (strain ATCC 700825 / FA 1090).